The sequence spans 108 residues: UPF0060 membrane protein YnfA (108 aa).

Topologically, residues 1–5 (MFKTT) are periplasmic. The helical transmembrane segment at 6 to 26 (LLFFITALCEIIGCFLPWLWL) threads the bilayer. Residues 27 to 30 (KRNG) are Cytoplasmic-facing. The chain crosses the membrane as a helical span at residues 31 to 51 (SIWLLLPAGVSLAFFVWLLTL). At 52–60 (HPAASGRVY) the chain is on the periplasmic side. A helical membrane pass occupies residues 61–81 (AAYGGVYVCTALLWLRFIDGV). Over 82-84 (KLS) the chain is Cytoplasmic. Residues 85 to 105 (LYDWSGALIALCGMLIIVAGW) traverse the membrane as a helical segment. At 106–108 (GRA) the chain is on the periplasmic side.

It belongs to the UPF0060 family.

Its subcellular location is the cell inner membrane. The chain is UPF0060 membrane protein YnfA from Escherichia fergusonii (strain ATCC 35469 / DSM 13698 / CCUG 18766 / IAM 14443 / JCM 21226 / LMG 7866 / NBRC 102419 / NCTC 12128 / CDC 0568-73).